The sequence spans 218 residues: MDPNMNNLLKWGIQNSTATQQTSDSNNNASQAPRSNITPEMLSALFGGPSEADLMKAAMEALRSDEVDLENKLIAFDNFEQLIESIDNANNLEPLGLWTPLVELLKHEEPDMRRMAAWCIGTAVQNNEKAQDKLIVMNAIPTLVSMSTQDPVPAVRKKAVYALSSAVRNYQPGTNELVKHLPGGYASGKVDAADMDTIDMIMDKLRAHPVSSSPPSAA.

ARM repeat units follow at residues 26 to 67, 86 to 125, and 128 to 168; these read NNNA…SDEV, IDNANNLEPLGLWTPLVELLKHEEPDMRRMAAWCIGTAVQ, and EKAQ…SAVR.

The protein belongs to the FES1 family.

It is found in the cytoplasm. In terms of biological role, functions as a nucleotide exchange factor (NEF) for Hsp70 chaperones which accelerates the release of ADP. Required for fully efficient Hsp70-mediated folding of proteins. The chain is Hsp70 nucleotide exchange factor fes1 (fes1) from Emericella nidulans (strain FGSC A4 / ATCC 38163 / CBS 112.46 / NRRL 194 / M139) (Aspergillus nidulans).